The following is a 320-amino-acid chain: MKIQIIWLTLVLIVVEANAVKQGKNATIPALIVFGDSIMDTGNNNNLPTLLKCNFPPYGKDYPGGFATGRFSDGRVPSDLIAEKIGLAKTLPAYMNPYLKPEDLLKGVTFASGGTGYDPLTAKIMSVISVWDQLIYFKEYISKIKRHFGEEKAKDILEHSFFLVVSSSNDLAHTYLAQAHRYDRTSYANFLADSAVHFVRELHKLGAQKIGVFSAVPVGCVPLQRTVFGDKELDGVILYINVYDTLFDMIQHPKKYGFEVADRGCCGKGLLTISYLCNSLNQFTCSNSSAYIFWDSYHPSKRAYQVIVDNLLDKYLSKVY.

Residues 1–19 form the signal peptide; it reads MKIQIIWLTLVLIVVEANA. An N-linked (GlcNAc...) asparagine glycan is attached at Asn25. The active-site Nucleophile is the Ser37. Asn287 is a glycosylation site (N-linked (GlcNAc...) asparagine). Active-site residues include Asp295 and His298.

The protein belongs to the 'GDSL' lipolytic enzyme family.

It is found in the secreted. This is GDSL esterase/lipase At3g43570 from Arabidopsis thaliana (Mouse-ear cress).